The following is a 592-amino-acid chain: Proline--tRNA ligase (592 aa).

This sequence belongs to the class-II aminoacyl-tRNA synthetase family. ProS type 1 subfamily. Homodimer.

The protein localises to the cytoplasm. The catalysed reaction is tRNA(Pro) + L-proline + ATP = L-prolyl-tRNA(Pro) + AMP + diphosphate. Functionally, catalyzes the attachment of proline to tRNA(Pro) in a two-step reaction: proline is first activated by ATP to form Pro-AMP and then transferred to the acceptor end of tRNA(Pro). As ProRS can inadvertently accommodate and process non-cognate amino acids such as alanine and cysteine, to avoid such errors it has two additional distinct editing activities against alanine. One activity is designated as 'pretransfer' editing and involves the tRNA(Pro)-independent hydrolysis of activated Ala-AMP. The other activity is designated 'posttransfer' editing and involves deacylation of mischarged Ala-tRNA(Pro). The misacylated Cys-tRNA(Pro) is not edited by ProRS. The chain is Proline--tRNA ligase from Corynebacterium urealyticum (strain ATCC 43042 / DSM 7109).